We begin with the raw amino-acid sequence, 1059 residues long: DNA (cytosine-5)-methyltransferase CMT1 (1059 aa).

Disordered regions lie at residues 1 to 196 and 230 to 272; these read MVPE…GALA and CVGE…DEAR. The segment covering 29–41 has biased composition (acidic residues); sequence AEAEAVADLDEID. Basic and acidic residues-rich tracts occupy residues 42 to 79, 92 to 129, and 147 to 157; these read REMSRAESRKRQRRTAKEKPGARKGATEWKPEDVEKAA, REMPRPELRKRQRRTAKEKPSAHEGATEWKPEDVEKAA, and SRGKRQRGVEK. A compositionally biased stretch (basic residues) spans 158-167; sequence VKRRTRKKTA. Residues 252–262 are compositionally biased toward basic and acidic residues; it reads RRVEDSDDHFV. The 125-residue stretch at 312–436 folds into the BAH domain; it reads EIYHLDDDVY…VAYSTFANLP (125 aa). The SAM-dependent MTase C5-type domain occupies 479 to 1017; sequence ASLLDLYSGC…YALGLAYRGE (539 aa). The 66-residue stretch at 584-649 folds into the Chromo domain; it reads FDVEELLEIC…KGHKENILPL (66 aa). Residue C662 is part of the active site.

This sequence belongs to the class I-like SAM-binding methyltransferase superfamily. C5-methyltransferase family.

The protein localises to the nucleus. The catalysed reaction is a 2'-deoxycytidine in DNA + S-adenosyl-L-methionine = a 5-methyl-2'-deoxycytidine in DNA + S-adenosyl-L-homocysteine + H(+). Functionally, involved in CpXpG DNA methylation. May not play a major role in maintaining CpXpG methylation. This is DNA (cytosine-5)-methyltransferase CMT1 from Oryza sativa subsp. japonica (Rice).